Consider the following 146-residue polypeptide: Protein archease (146 aa).

Ca(2+) is bound by residues D16, D145, and I146.

This sequence belongs to the archease family.

Its function is as follows. Activates the tRNA-splicing ligase complex by facilitating the enzymatic turnover of catalytic subunit RtcB. Acts by promoting the guanylylation of RtcB, a key intermediate step in tRNA ligation. Can also alter the NTP specificity of RtcB such that ATP, dGTP or ITP is used efficiently. The sequence is that of Protein archease from Methanosarcina barkeri (strain Fusaro / DSM 804).